The sequence spans 123 residues: Integration host factor subunit alpha (123 aa).

Residues 97-123 (NANGSAPSMSSSASAVDDDKSESASRT) are disordered. Residues 98–111 (ANGSAPSMSSSASA) show a composition bias toward low complexity. Over residues 113–123 (DDDKSESASRT) the composition is skewed to basic and acidic residues.

Belongs to the bacterial histone-like protein family. As to quaternary structure, heterodimer of an alpha and a beta chain.

In terms of biological role, this protein is one of the two subunits of integration host factor, a specific DNA-binding protein that functions in genetic recombination as well as in transcriptional and translational control. The chain is Integration host factor subunit alpha from Rhodopseudomonas palustris (strain BisB5).